Reading from the N-terminus, the 482-residue chain is 23S rRNA (uracil(1939)-C(5))-methyltransferase RlmD (482 aa).

Residues Cys85, Cys95, Cys98, and Cys177 each contribute to the [4Fe-4S] cluster site. S-adenosyl-L-methionine-binding residues include Gln285, Phe314, Asn319, Glu335, Asn370, and Asp391. Cys438 serves as the catalytic Nucleophile.

This sequence belongs to the class I-like SAM-binding methyltransferase superfamily. RNA M5U methyltransferase family. RlmD subfamily.

It catalyses the reaction uridine(1939) in 23S rRNA + S-adenosyl-L-methionine = 5-methyluridine(1939) in 23S rRNA + S-adenosyl-L-homocysteine + H(+). In terms of biological role, catalyzes the formation of 5-methyl-uridine at position 1939 (m5U1939) in 23S rRNA. This chain is 23S rRNA (uracil(1939)-C(5))-methyltransferase RlmD, found in Acidovorax sp. (strain JS42).